Reading from the N-terminus, the 118-residue chain is Small ribosomal subunit protein uS13 (118 aa).

Positions 91–118 (HRRGLPVRGQRTRTNARTRKGPRRPIKK) are disordered.

This sequence belongs to the universal ribosomal protein uS13 family. Part of the 30S ribosomal subunit. Forms a loose heterodimer with protein S19. Forms two bridges to the 50S subunit in the 70S ribosome.

Functionally, located at the top of the head of the 30S subunit, it contacts several helices of the 16S rRNA. In the 70S ribosome it contacts the 23S rRNA (bridge B1a) and protein L5 of the 50S subunit (bridge B1b), connecting the 2 subunits; these bridges are implicated in subunit movement. Contacts the tRNAs in the A and P-sites. This Methylococcus capsulatus (strain ATCC 33009 / NCIMB 11132 / Bath) protein is Small ribosomal subunit protein uS13.